The sequence spans 424 residues: Serine--tRNA ligase (424 aa).

Position 231–233 (231–233 (TAE)) interacts with L-serine. 261-263 (RSE) is a binding site for ATP. E284 contacts L-serine. Residue 348-351 (ETSS) coordinates ATP. Residue S383 coordinates L-serine.

This sequence belongs to the class-II aminoacyl-tRNA synthetase family. Type-1 seryl-tRNA synthetase subfamily. As to quaternary structure, homodimer. The tRNA molecule binds across the dimer.

The protein localises to the cytoplasm. It catalyses the reaction tRNA(Ser) + L-serine + ATP = L-seryl-tRNA(Ser) + AMP + diphosphate + H(+). It carries out the reaction tRNA(Sec) + L-serine + ATP = L-seryl-tRNA(Sec) + AMP + diphosphate + H(+). It participates in aminoacyl-tRNA biosynthesis; selenocysteinyl-tRNA(Sec) biosynthesis; L-seryl-tRNA(Sec) from L-serine and tRNA(Sec): step 1/1. Its function is as follows. Catalyzes the attachment of serine to tRNA(Ser). Is also able to aminoacylate tRNA(Sec) with serine, to form the misacylated tRNA L-seryl-tRNA(Sec), which will be further converted into selenocysteinyl-tRNA(Sec). The polypeptide is Serine--tRNA ligase (Metamycoplasma arthritidis (strain 158L3-1) (Mycoplasma arthritidis)).